We begin with the raw amino-acid sequence, 65 residues long: Toxin AaHIT4 (65 aa).

The LCN-type CS-alpha/beta domain maps to Glu-1–Asp-64. Cystine bridges form between Cys-12-Cys-63, Cys-16-Cys-38, Cys-23-Cys-45, and Cys-27-Cys-47.

Belongs to the long (4 C-C) scorpion toxin superfamily. Sodium channel inhibitor family. Expressed by the venom gland.

The protein resides in the secreted. Its function is as follows. Has a toxic effect on insects and mammals and is capable of competing with anti-insect scorpion toxins for binding to the sodium channel (Nav) of insects. It also modulates the binding of alpha-type and beta-type anti-mammal scorpion toxins to the mammal sodium channel. It may act on both site 3 and site 4 of voltage-gated sodium channels. In Androctonus australis (Sahara scorpion), this protein is Toxin AaHIT4.